Here is a 331-residue protein sequence, read N- to C-terminus: MTISLEADLKSLQQSAQAAISGCDDLDGLDKLRVQYLGKKGELSLILKGMGKLSAEERPKFGAIANEVKEALQHDLESRKANLQNAAIEAQLAAETLDVTMAGSYRPQGRRHPLNSTVDRVLDIFVGLGYTVATGPQVETDYYNFEALNIPADHPARDMQDTFFLKDGRLLRTHTSPVQIRYMEKHDPPIRIVAPGRVYRRDTVDATHSAVFHQVELLAIDKGLAFTHLKGTIQAFIKQMFGEALPIRFRASYFPFTEPSAEVDVQWQGKWLEVMGCGMVDPNVMEAVGYDPEVYTGFAAGFGVERFAMVLHQIDDIRRLYNSDLRFLRQF.

Residue Glu-258 participates in Mg(2+) binding.

The protein belongs to the class-II aminoacyl-tRNA synthetase family. Phe-tRNA synthetase alpha subunit type 1 subfamily. In terms of assembly, tetramer of two alpha and two beta subunits. The cofactor is Mg(2+).

Its subcellular location is the cytoplasm. The enzyme catalyses tRNA(Phe) + L-phenylalanine + ATP = L-phenylalanyl-tRNA(Phe) + AMP + diphosphate + H(+). In Synechocystis sp. (strain ATCC 27184 / PCC 6803 / Kazusa), this protein is Phenylalanine--tRNA ligase alpha subunit (pheS).